A 289-amino-acid chain; its full sequence is BTB/POZ domain-containing protein KCTD7 (289 aa).

Residues 1–42 (MVVVNGREPDSRHSDGAMSSSEAEDDFLEPATPTATQAGHGL) are disordered. A BTB domain is found at 53-141 (VPLNIGGAHF…YAIGPLLEQL (89 aa)).

Interacts with CUL3.

Its subcellular location is the cell membrane. The protein resides in the cytoplasm. It localises to the cytosol. Functionally, may be involved in the control of excitability of cortical neurons. The sequence is that of BTB/POZ domain-containing protein KCTD7 (Kctd7) from Rattus norvegicus (Rat).